A 492-amino-acid chain; its full sequence is Ketol-acid reductoisomerase (NADP(+)) (492 aa).

Positions 15 to 208 (AQLGQCRFMD…GGDRAGVLQS (194 aa)) constitute a KARI N-terminal Rossmann domain. NADP(+) contacts are provided by residues 45–48 (CGAQ), arginine 68, arginine 76, serine 78, and 108–110 (DKQ). Residue histidine 132 is part of the active site. Glycine 158 serves as a coordination point for NADP(+). KARI C-terminal knotted domains are found at residues 209–353 (SFIA…DEQT) and 354–486 (YFDK…MTDM). Mg(2+) contacts are provided by aspartate 217, glutamate 221, glutamate 389, and glutamate 393. Serine 414 is a substrate binding site.

It belongs to the ketol-acid reductoisomerase family. The cofactor is Mg(2+).

It catalyses the reaction (2R)-2,3-dihydroxy-3-methylbutanoate + NADP(+) = (2S)-2-acetolactate + NADPH + H(+). The enzyme catalyses (2R,3R)-2,3-dihydroxy-3-methylpentanoate + NADP(+) = (S)-2-ethyl-2-hydroxy-3-oxobutanoate + NADPH + H(+). Its pathway is amino-acid biosynthesis; L-isoleucine biosynthesis; L-isoleucine from 2-oxobutanoate: step 2/4. It participates in amino-acid biosynthesis; L-valine biosynthesis; L-valine from pyruvate: step 2/4. In terms of biological role, involved in the biosynthesis of branched-chain amino acids (BCAA). Catalyzes an alkyl-migration followed by a ketol-acid reduction of (S)-2-acetolactate (S2AL) to yield (R)-2,3-dihydroxy-isovalerate. In the isomerase reaction, S2AL is rearranged via a Mg-dependent methyl migration to produce 3-hydroxy-3-methyl-2-ketobutyrate (HMKB). In the reductase reaction, this 2-ketoacid undergoes a metal-dependent reduction by NADPH to yield (R)-2,3-dihydroxy-isovalerate. The chain is Ketol-acid reductoisomerase (NADP(+)) from Shewanella oneidensis (strain ATCC 700550 / JCM 31522 / CIP 106686 / LMG 19005 / NCIMB 14063 / MR-1).